The sequence spans 354 residues: 3-dehydroquinate synthase (354 aa).

NAD(+)-binding positions include 106–110, 130–131, lysine 143, and lysine 152; these read GVIGD and TS. Zn(2+) contacts are provided by glutamate 185, histidine 246, and histidine 262.

This sequence belongs to the sugar phosphate cyclases superfamily. Dehydroquinate synthase family. The cofactor is Co(2+). Zn(2+) is required as a cofactor. NAD(+) serves as cofactor.

Its subcellular location is the cytoplasm. It catalyses the reaction 7-phospho-2-dehydro-3-deoxy-D-arabino-heptonate = 3-dehydroquinate + phosphate. The protein operates within metabolic intermediate biosynthesis; chorismate biosynthesis; chorismate from D-erythrose 4-phosphate and phosphoenolpyruvate: step 2/7. Catalyzes the conversion of 3-deoxy-D-arabino-heptulosonate 7-phosphate (DAHP) to dehydroquinate (DHQ). The polypeptide is 3-dehydroquinate synthase (Leuconostoc mesenteroides subsp. mesenteroides (strain ATCC 8293 / DSM 20343 / BCRC 11652 / CCM 1803 / JCM 6124 / NCDO 523 / NBRC 100496 / NCIMB 8023 / NCTC 12954 / NRRL B-1118 / 37Y)).